The following is a 650-amino-acid chain: Serine/threonine-protein phosphatase with EF-hands 1 (650 aa).

The IQ domain occupies 16 to 45 (VIKAALVIQNWYRRYRARLRVRQHYALAIF). The interval 124-456 (IHILLQAFKQ…PQFFQYQVTS (333 aa)) is catalytic. Residues Asp175, His177, Asp204, and Asn236 each contribute to the Mn(2+) site. His237 serves as the catalytic Proton donor. Residue His288 participates in Mn(2+) binding. Positions 315–348 (PVLGNQETGEKRNKSASNYVEPRKVEPDKTPSED) are disordered. Positions 335 to 348 (EPRKVEPDKTPSED) are enriched in basic and acidic residues. Residue His404 coordinates Mn(2+). EF-hand domains follow at residues 484–519 (SRKT…ILGL), 567–602 (RYRS…FNAH), and 607–642 (IDDS…VHKY). The Ca(2+) site is built by Asp497, Ser499, Ser501, Arg503, Glu508, Asp580, Asp582, Ser584, Glu591, Asp620, Asn622, Asp624, Asn626, and Glu631.

Belongs to the PPP phosphatase family. Mn(2+) serves as cofactor. Mg(2+) is required as a cofactor. As to expression, in the embryo it is almost exclusively expressed in the peripheral nervous system, within sensory neurons of cranial and dorsal root ganglia. Otherwise found in fetal inner ear and a small group of neurons in the midbrain/pons junction.

The enzyme catalyses O-phospho-L-seryl-[protein] + H2O = L-seryl-[protein] + phosphate. It carries out the reaction O-phospho-L-threonyl-[protein] + H2O = L-threonyl-[protein] + phosphate. Activated by calcium. In terms of biological role, may have a role in the recovery or adaptation response of photoreceptors. May have a role in diverse sensory neurons and in development. This chain is Serine/threonine-protein phosphatase with EF-hands 1 (Ppef1), found in Mus musculus (Mouse).